The primary structure comprises 203 residues: FMN-dependent NADH:quinone oxidoreductase (203 aa).

Residues S9, 15-17 (SVS), and 138-141 (SRGG) each bind FMN.

It belongs to the azoreductase type 1 family. Homodimer. FMN is required as a cofactor.

It carries out the reaction 2 a quinone + NADH + H(+) = 2 a 1,4-benzosemiquinone + NAD(+). The catalysed reaction is N,N-dimethyl-1,4-phenylenediamine + anthranilate + 2 NAD(+) = 2-(4-dimethylaminophenyl)diazenylbenzoate + 2 NADH + 2 H(+). Functionally, quinone reductase that provides resistance to thiol-specific stress caused by electrophilic quinones. Its function is as follows. Also exhibits azoreductase activity. Catalyzes the reductive cleavage of the azo bond in aromatic azo compounds to the corresponding amines. This chain is FMN-dependent NADH:quinone oxidoreductase, found in Methylorubrum extorquens (strain CM4 / NCIMB 13688) (Methylobacterium extorquens).